The sequence spans 422 residues: MALVEGCKHSLEISIPAAEVETETNRVVLDVQKRAKLPGFRPGKSPASIIRKQFAGDIRQQVLESLIPTHLQKQLEAENLNVVGTPDISDVHFHDNEPLRFKATFEVVPEIELGEYTNIEVPYQDPEVTDEDVTSRIDEIREQKAQYVNIDPRPLADGDFAVVSLESLEGVSGDPVKTDEMQLEIGAKETFEAFNENLRGLSPGDEKDFEVEYPADYGSEKLAGRKVKFHAVVKGLRKKELPELDDEFAQELGDYRTVDELKEAVRKAIFSQRQYEAQQEAKNKIVDKLVDAHEFPVPEVFVERQIRNRVEQSLRAMAEQGVDPSKLKLDWEKVKEAQREKATREVKASLLLGKVSDREAIRATRDEVDAEVEKAARQQRKPVAAVHMEFEKDGTLGRIASHIQTDKTLSFLFERARKTAES.

Residues 158–242 (GDFAVVSLES…VKGLRKKELP (85 aa)) form the PPIase FKBP-type domain.

It belongs to the FKBP-type PPIase family. Tig subfamily.

It is found in the cytoplasm. It carries out the reaction [protein]-peptidylproline (omega=180) = [protein]-peptidylproline (omega=0). Involved in protein export. Acts as a chaperone by maintaining the newly synthesized protein in an open conformation. Functions as a peptidyl-prolyl cis-trans isomerase. This chain is Trigger factor, found in Solibacter usitatus (strain Ellin6076).